A 527-amino-acid chain; its full sequence is Peptide chain release factor 3 (527 aa).

The 269-residue stretch at 9 to 277 (AKRRTFAIIS…AVVNWAPKPL (269 aa)) folds into the tr-type G domain. Residues 18–25 (SHPDAGKT), 86–90 (DTPGH), and 140–143 (NKLD) contribute to the GTP site.

Belongs to the TRAFAC class translation factor GTPase superfamily. Classic translation factor GTPase family. PrfC subfamily.

The protein localises to the cytoplasm. In terms of biological role, increases the formation of ribosomal termination complexes and stimulates activities of RF-1 and RF-2. It binds guanine nucleotides and has strong preference for UGA stop codons. It may interact directly with the ribosome. The stimulation of RF-1 and RF-2 is significantly reduced by GTP and GDP, but not by GMP. The chain is Peptide chain release factor 3 from Pseudomonas savastanoi pv. phaseolicola (strain 1448A / Race 6) (Pseudomonas syringae pv. phaseolicola (strain 1448A / Race 6)).